Here is a 216-residue protein sequence, read N- to C-terminus: UPF0323 lipoprotein HPG27_212 (216 aa).

The N-terminal stretch at 1–27 (MKKPYRKISDYAIVGGLSALVMVSIVG) is a signal peptide. C28 carries the N-palmitoyl cysteine lipid modification. C28 is lipidated: S-diacylglycerol cysteine. Polar residues predominate over residues 159–170 (QRTYKSPQAYQR). The tract at residues 159-216 (QRTYKSPQAYQRSQNSFSKSAPSASSMGGASKGQSGFFGSSRPTSSPAVSSGTRGFNS) is disordered. Over residues 171-209 (SQNSFSKSAPSASSMGGASKGQSGFFGSSRPTSSPAVSS) the composition is skewed to low complexity.

This sequence belongs to the UPF0323 family.

The protein resides in the cell membrane. In Helicobacter pylori (strain G27), this protein is UPF0323 lipoprotein HPG27_212.